The chain runs to 355 residues: Phosphoserine aminotransferase (355 aa).

Arg-41 lines the L-glutamate pocket. Residues 75–76 (AS), Trp-99, Thr-147, Asp-166, and Gln-189 each bind pyridoxal 5'-phosphate. Lys-190 bears the N6-(pyridoxal phosphate)lysine mark. Residue 231–232 (NT) coordinates pyridoxal 5'-phosphate.

It belongs to the class-V pyridoxal-phosphate-dependent aminotransferase family. SerC subfamily. In terms of assembly, homodimer. Pyridoxal 5'-phosphate is required as a cofactor.

The protein localises to the cytoplasm. It carries out the reaction O-phospho-L-serine + 2-oxoglutarate = 3-phosphooxypyruvate + L-glutamate. It catalyses the reaction 4-(phosphooxy)-L-threonine + 2-oxoglutarate = (R)-3-hydroxy-2-oxo-4-phosphooxybutanoate + L-glutamate. It functions in the pathway amino-acid biosynthesis; L-serine biosynthesis; L-serine from 3-phospho-D-glycerate: step 2/3. It participates in cofactor biosynthesis; pyridoxine 5'-phosphate biosynthesis; pyridoxine 5'-phosphate from D-erythrose 4-phosphate: step 3/5. Catalyzes the reversible conversion of 3-phosphohydroxypyruvate to phosphoserine and of 3-hydroxy-2-oxo-4-phosphonooxybutanoate to phosphohydroxythreonine. In Bacteroides fragilis (strain ATCC 25285 / DSM 2151 / CCUG 4856 / JCM 11019 / LMG 10263 / NCTC 9343 / Onslow / VPI 2553 / EN-2), this protein is Phosphoserine aminotransferase.